A 206-amino-acid chain; its full sequence is Small ribosomal subunit protein uS4 (206 aa).

Positions 96-156 (GRLDNVVYRM…EKAKKQSRVK (61 aa)) constitute an S4 RNA-binding domain.

The protein belongs to the universal ribosomal protein uS4 family. As to quaternary structure, part of the 30S ribosomal subunit. Contacts protein S5. The interaction surface between S4 and S5 is involved in control of translational fidelity.

In terms of biological role, one of the primary rRNA binding proteins, it binds directly to 16S rRNA where it nucleates assembly of the body of the 30S subunit. With S5 and S12 plays an important role in translational accuracy. In Escherichia fergusonii (strain ATCC 35469 / DSM 13698 / CCUG 18766 / IAM 14443 / JCM 21226 / LMG 7866 / NBRC 102419 / NCTC 12128 / CDC 0568-73), this protein is Small ribosomal subunit protein uS4.